Consider the following 60-residue polypeptide: Potassium channel toxin Tst-beta-KTx (60 aa).

In terms of domain architecture, BetaSPN-type CS-alpha/beta spans 26–60; it reads QFGCPAYEGYCNDHCNDIERKDGECHGFKCKCAKD. Cystine bridges form between C29–C50, C36–C55, and C40–C57.

Belongs to the long chain scorpion toxin family. Class 1 subfamily. In terms of tissue distribution, expressed by the venom gland.

The protein resides in the secreted. In terms of biological role, inhibits voltage-gated potassium channels Kv1.1/KCNA1, Kv1.2/KCNA2, and Kv1.3/KCNA3. Does not induce hemolytic activity, lactate dehydrogenase (LDH) release from mast cells, mast cell degranulation, and antimicrobial effects. In vivo, injection into mice causes moderate edema formation, but induces very weak or no change in nociceptive sensibility. It also reduces mice locomotion, suggesting an increase in anxiety, but causes no alteration in rearing (standing on hind limbs). The polypeptide is Potassium channel toxin Tst-beta-KTx (Tityus stigmurus (Brazilian scorpion)).